The following is a 131-amino-acid chain: Profilin-5 (131 aa).

Cysteines 13 and 115 form a disulfide. Positions 81–97 match the Involved in PIP2 interaction motif; sequence AVIRGKKGAGGITIKKT. T111 carries the phosphothreonine modification.

It belongs to the profilin family. In terms of assembly, occurs in many kinds of cells as a complex with monomeric actin in a 1:1 ratio. Post-translationally, phosphorylated by MAP kinases.

It localises to the cytoplasm. It is found in the cytoskeleton. Binds to actin and affects the structure of the cytoskeleton. At high concentrations, profilin prevents the polymerization of actin, whereas it enhances it at low concentrations. The protein is Profilin-5 of Olea europaea (Common olive).